A 235-amino-acid chain; its full sequence is Glycerol-3-phosphate acyltransferase (235 aa).

The next 6 membrane-spanning stretches (helical) occupy residues Leu-4 to Gly-24, Ala-56 to Phe-76, Leu-94 to Gly-114, Ala-122 to Leu-142, Val-152 to Phe-172, and Phe-191 to Leu-211.

The protein belongs to the PlsY family. Probably interacts with PlsX.

The protein localises to the cell inner membrane. It carries out the reaction an acyl phosphate + sn-glycerol 3-phosphate = a 1-acyl-sn-glycero-3-phosphate + phosphate. The protein operates within lipid metabolism; phospholipid metabolism. Functionally, catalyzes the transfer of an acyl group from acyl-phosphate (acyl-PO(4)) to glycerol-3-phosphate (G3P) to form lysophosphatidic acid (LPA). This enzyme utilizes acyl-phosphate as fatty acyl donor, but not acyl-CoA or acyl-ACP. This Chlorobium phaeobacteroides (strain DSM 266 / SMG 266 / 2430) protein is Glycerol-3-phosphate acyltransferase.